Reading from the N-terminus, the 51-residue chain is uncharacterized protein (51 aa).

This is an uncharacterized protein from Treponema pallidum (strain Nichols).